The primary structure comprises 323 residues: Prostaglandin F synthase 2 (323 aa).

Residues 20-24 and Asp-50 contribute to the NADP(+) site; that span reads GFGTY. Tyr-55 serves as the catalytic Proton donor. His-117 provides a ligand contact to substrate. NADP(+)-binding positions include 166–167, Gln-190, 216–221, and 270–280; these read SN, YAALGA, and KSFNKKRIKEN.

Belongs to the aldo/keto reductase family. In terms of assembly, monomer.

It is found in the cytoplasm. It carries out the reaction prostaglandin F2alpha + NADP(+) = prostaglandin D2 + NADPH + H(+). It functions in the pathway lipid metabolism; prostaglandin biosynthesis. Functionally, catalyzes the reduction of PGD(2) and PGH(2) to PGF(2 alpha) and a stereoisomer, respectively. It has a broad substrate specificity and also reduces other carbonyl compounds. The sequence is that of Prostaglandin F synthase 2 from Bos taurus (Bovine).